The sequence spans 205 residues: ATP synthase subunit b (205 aa).

Positions 1–27 (MKLNKKHLVAILSVLSLSIIVVPLLTS) are cleaved as a signal peptide. A lipid anchor (N-palmitoyl cysteine) is attached at C28. C28 carries S-diacylglycerol cysteine lipidation. Residues 48 to 68 (VWVFIAQVIAMCVVFSLVLWL) form a helical membrane-spanning segment.

Belongs to the ATPase B chain family. F-type ATPases have 2 components, F(1) - the catalytic core - and F(0) - the membrane proton channel. F(1) has five subunits: alpha(3), beta(3), gamma(1), delta(1), epsilon(1). F(0) has three main subunits: a(1), b(2) and c(10-14). The alpha and beta chains form an alternating ring which encloses part of the gamma chain. F(1) is attached to F(0) by a central stalk formed by the gamma and epsilon chains, while a peripheral stalk is formed by the delta and b chains.

The protein localises to the cell membrane. In terms of biological role, f(1)F(0) ATP synthase produces ATP from ADP in the presence of a proton or sodium gradient. F-type ATPases consist of two structural domains, F(1) containing the extramembraneous catalytic core and F(0) containing the membrane proton channel, linked together by a central stalk and a peripheral stalk. During catalysis, ATP synthesis in the catalytic domain of F(1) is coupled via a rotary mechanism of the central stalk subunits to proton translocation. Its function is as follows. Component of the F(0) channel, it forms part of the peripheral stalk, linking F(1) to F(0). This chain is ATP synthase subunit b, found in Ureaplasma parvum serovar 3 (strain ATCC 27815 / 27 / NCTC 11736).